The chain runs to 108 residues: Cell cycle protein GpsB (108 aa).

Positions Leu-32–Ala-69 form a coiled coil.

This sequence belongs to the GpsB family. As to quaternary structure, forms polymers through the coiled coil domains. Interacts with PBP1, MreC and EzrA.

It localises to the cytoplasm. In terms of biological role, divisome component that associates with the complex late in its assembly, after the Z-ring is formed, and is dependent on DivIC and PBP2B for its recruitment to the divisome. Together with EzrA, is a key component of the system that regulates PBP1 localization during cell cycle progression. Its main role could be the removal of PBP1 from the cell pole after pole maturation is completed. Also contributes to the recruitment of PBP1 to the division complex. Not essential for septum formation. The polypeptide is Cell cycle protein GpsB (Streptococcus pyogenes serotype M49 (strain NZ131)).